Consider the following 201-residue polypeptide: Oxalate oxidase 1 (201 aa).

Cys-10 and Cys-26 are disulfide-bonded. The 152-residue stretch at 40-191 (SKLTKAGNTS…ALRVEAGVVE (152 aa)) folds into the Cupin type-1 domain. N-linked (GlcNAc...) asparagine glycosylation is present at Asn-47. Oxalate contacts are provided by Asn-75 and Asn-85. 4 residues coordinate Mn(2+): His-88, His-90, Glu-95, and His-137. Oxalate-binding residues include His-90 and Glu-95.

Belongs to the germin family. In terms of assembly, homo hexamer; a trimer of dimers. Post-translationally, glycosylated. A form called G contains antennary GlcNAc residues, whereas a form called G' lacks antennary GlcNAc residues in its otherwise identical glycans.

It is found in the secreted. It localises to the extracellular space. The protein resides in the apoplast. The protein localises to the cell wall. The catalysed reaction is oxalate + O2 + 2 H(+) = H2O2 + 2 CO2. In terms of biological role, releases hydrogen peroxide in the apoplast which may be important for cross-linking reactions in the cell wall biochemistry. May play an important role in several aspects of plant growth and defense mechanisms. This is Oxalate oxidase 1 from Hordeum vulgare (Barley).